A 514-amino-acid polypeptide reads, in one-letter code: Putative ribose/galactose/methyl galactoside import ATP-binding protein 3 (514 aa).

2 ABC transporter domains span residues 21 to 256 (LRLD…VGRT) and 267 to 512 (VPTD…SGRS). 53–60 (GENGAGKS) contributes to the ATP binding site.

The protein belongs to the ABC transporter superfamily. Carbohydrate importer 2 (CUT2) (TC 3.A.1.2) family.

Its subcellular location is the cell inner membrane. The catalysed reaction is D-ribose(out) + ATP + H2O = D-ribose(in) + ADP + phosphate + H(+). It carries out the reaction D-galactose(out) + ATP + H2O = D-galactose(in) + ADP + phosphate + H(+). In terms of biological role, part of an ABC transporter complex involved in carbohydrate import. Could be involved in ribose, galactose and/or methyl galactoside import. Responsible for energy coupling to the transport system. The protein is Putative ribose/galactose/methyl galactoside import ATP-binding protein 3 of Burkholderia cenocepacia (strain HI2424).